Consider the following 66-residue polypeptide: uncharacterized protein (66 aa).

The next 2 membrane-spanning stretches (helical) occupy residues 4–24 (ALFI…LLIF) and 38–58 (LLTP…ILVL).

The protein resides in the membrane. This is an uncharacterized protein from Saccharomyces cerevisiae (strain ATCC 204508 / S288c) (Baker's yeast).